The sequence spans 669 residues: Zinc finger MYM-type protein 5 (669 aa).

Residues Lys-88, Lys-91, Lys-134, Lys-149, Lys-166, and Lys-225 each participate in a glycyl lysine isopeptide (Lys-Gly) (interchain with G-Cter in SUMO2) cross-link. MYM-type zinc fingers lie at residues 265 to 299 (HLFC…KKAN), 311 to 351 (QEFY…RHEV), 358 to 393 (HKLC…KSTG), and 404 to 431 (KRFC…ASEN). Glycyl lysine isopeptide (Lys-Gly) (interchain with G-Cter in SUMO2) cross-links involve residues Lys-443, Lys-455, Lys-462, and Lys-552.

Interacts (via N-terminal 120 amino acid region) with ETV5 (via C-terminal).

It is found in the nucleus. In terms of biological role, functions as a transcriptional regulator. The sequence is that of Zinc finger MYM-type protein 5 (ZMYM5) from Homo sapiens (Human).